The following is a 1019-amino-acid chain: Photoactivated adenylate cyclase subunit alpha-like protein 1224-5/1F (1019 aa).

The 94-residue stretch at 55-148 folds into the BLUF 1 domain; sequence LRRLMYLSAS…GRMYGWWHLK (94 aa). In terms of domain architecture, Guanylate cyclase 1 spans 204–332; sequence VVTVIYLVEF…DWINSASRIT (129 aa). Residues 467-559 enclose the BLUF 2 domain; that stretch reads LITLTYISQA…GVYGSPLDMT (93 aa). A Guanylate cyclase 2 domain is found at 615 to 744; the sequence is VMLATAISSF…EVRARVLEVE (130 aa). The interval 825 to 863 is disordered; that stretch reads NISCRGGNPPAGGIPTSPKVRPPGRTNSVSSYTPDPKQA.

The protein belongs to the adenylyl cyclase class-4/guanylyl cyclase family. As to quaternary structure, heterotetramer of two alpha and two beta subunits.

The protein resides in the cell projection. It localises to the cilium. Its subcellular location is the flagellum. The chain is Photoactivated adenylate cyclase subunit alpha-like protein 1224-5/1F from Euglena gracilis.